A 145-amino-acid polypeptide reads, in one-letter code: Trafficking protein particle complex subunit 1 (145 aa).

It belongs to the TRAPP small subunits family. BET5 subfamily. In terms of assembly, part of the multisubunit transport protein particle (TRAPP) complex. The heterodimer TRAPPC6B-TRAPPC3 interacts with TRAPPC1 likely providing a core for TRAPP complex formation.

The protein resides in the golgi apparatus. The protein localises to the cis-Golgi network. It is found in the endoplasmic reticulum. May play a role in vesicular transport from endoplasmic reticulum to Golgi. This chain is Trafficking protein particle complex subunit 1, found in Mus musculus (Mouse).